Consider the following 377-residue polypeptide: Glutamate 5-kinase (377 aa).

Position 22 (lysine 22) interacts with ATP. Serine 62, aspartate 149, and asparagine 161 together coordinate substrate. ATP contacts are provided by residues 181–182 (TD) and 223–229 (TGGMVTK). The PUA domain occupies 285 to 363 (RGAIVVDAGA…AQLKRFLGPQ (79 aa)).

This sequence belongs to the glutamate 5-kinase family.

The protein localises to the cytoplasm. It catalyses the reaction L-glutamate + ATP = L-glutamyl 5-phosphate + ADP. Its pathway is amino-acid biosynthesis; L-proline biosynthesis; L-glutamate 5-semialdehyde from L-glutamate: step 1/2. Its function is as follows. Catalyzes the transfer of a phosphate group to glutamate to form L-glutamate 5-phosphate. This is Glutamate 5-kinase from Bifidobacterium longum subsp. infantis (strain ATCC 15697 / DSM 20088 / JCM 1222 / NCTC 11817 / S12).